The sequence spans 288 residues: Nucleotide-binding protein Pcar_1935 (288 aa).

11 to 18 (GLSGSGKT) is an ATP binding site. 62–65 (DVRN) contacts GTP.

It belongs to the RapZ-like family.

In terms of biological role, displays ATPase and GTPase activities. This chain is Nucleotide-binding protein Pcar_1935, found in Syntrophotalea carbinolica (strain DSM 2380 / NBRC 103641 / GraBd1) (Pelobacter carbinolicus).